Here is a 141-residue protein sequence, read N- to C-terminus: 6,7-dimethyl-8-ribityllumazine synthase (141 aa).

5-amino-6-(D-ribitylamino)uracil contacts are provided by residues F14, 46–48, and 70–72; these read VFD and CVI. Residue 75–76 coordinates (2S)-2-hydroxy-3-oxobutyl phosphate; it reads ET. The Proton donor role is filled by H78. Residue L103 participates in 5-amino-6-(D-ribitylamino)uracil binding. R118 is a binding site for (2S)-2-hydroxy-3-oxobutyl phosphate.

As to quaternary structure, forms an icosahedral capsid composed of 60 subunits, arranged as a dodecamer of pentamers.

The catalysed reaction is (2S)-2-hydroxy-3-oxobutyl phosphate + 5-amino-6-(D-ribitylamino)uracil = 6,7-dimethyl-8-(1-D-ribityl)lumazine + phosphate + 2 H2O + H(+). It functions in the pathway cofactor biosynthesis; riboflavin biosynthesis; riboflavin from 2-hydroxy-3-oxobutyl phosphate and 5-amino-6-(D-ribitylamino)uracil: step 1/2. Catalyzes the formation of 6,7-dimethyl-8-ribityllumazine by condensation of 5-amino-6-(D-ribitylamino)uracil with 3,4-dihydroxy-2-butanone 4-phosphate. This is the penultimate step in the biosynthesis of riboflavin. This is 6,7-dimethyl-8-ribityllumazine synthase (ribH) from Methanocaldococcus jannaschii (strain ATCC 43067 / DSM 2661 / JAL-1 / JCM 10045 / NBRC 100440) (Methanococcus jannaschii).